The primary structure comprises 396 residues: MSEYSLFTSESVSEGHPDKIADQISDAVLDAIIAQDKHARVAVETLVKTGVAIVAGEVTTSAWVDLEQIVRDVICDIGYTSSDVGFDGATCGVMNIIGKQSPDINQGVDRAKPEDQGAGDQGLMFGYASNETDVLMPAPITFSHQLVQRQAEARKSGLLPWLRPDAKSQVTCRYEGGKVVGIDAVVLSTQHNPEVSYNDLREGVMELIVKHVLPAELLSKDTQFHINPTGQFIIGGPVGDCGLTGRKIIVDSYGGMARHGGGAFSGKDPSKVDRSAAYAGRYVAKNIVAAGLAERCEIQVSYAIGVAQPTSISLNTFGTGKISDDKIIKLVREVFDLRPYAITTMLDLLHPMYQETAAYGHFGRAPQTKTVGEDTFSTFTWEKTDRADALRSAAGL.

His-16 contacts ATP. A Mg(2+)-binding site is contributed by Asp-18. A K(+)-binding site is contributed by Glu-44. Glu-57 and Gln-100 together coordinate L-methionine. A flexible loop region spans residues 100-110 (QSPDINQGVDR). ATP contacts are provided by residues 165 to 167 (DAK), Asp-240, 246 to 247 (RK), Ala-263, and Lys-267. Asp-240 contributes to the L-methionine binding site. L-methionine is bound at residue Lys-271.

The protein belongs to the AdoMet synthase family. In terms of assembly, homotetramer; dimer of dimers. The cofactor is Mg(2+). K(+) is required as a cofactor.

Its subcellular location is the cytoplasm. It catalyses the reaction L-methionine + ATP + H2O = S-adenosyl-L-methionine + phosphate + diphosphate. The protein operates within amino-acid biosynthesis; S-adenosyl-L-methionine biosynthesis; S-adenosyl-L-methionine from L-methionine: step 1/1. Catalyzes the formation of S-adenosylmethionine (AdoMet) from methionine and ATP. The overall synthetic reaction is composed of two sequential steps, AdoMet formation and the subsequent tripolyphosphate hydrolysis which occurs prior to release of AdoMet from the enzyme. The protein is S-adenosylmethionine synthase of Pseudomonas fluorescens (strain Pf0-1).